We begin with the raw amino-acid sequence, 601 residues long: Nuclear envelope protein ndc1 (601 aa).

Residues methionine 1–alanine 34 lie on the Cytoplasmic side of the membrane. Residues cysteine 35–isoleucine 55 form a helical membrane-spanning segment. Topologically, residues serine 56–serine 58 are perinuclear space. Residues phenylalanine 59 to valine 79 traverse the membrane as a helical segment. Topologically, residues methionine 80 to lysine 106 are cytoplasmic. The chain crosses the membrane as a helical span at residues serine 107–isoleucine 127. Residues lysine 128 to arginine 153 are Perinuclear space-facing. The helical transmembrane segment at phenylalanine 154–tyrosine 174 threads the bilayer. Over leucine 175–arginine 182 the chain is Cytoplasmic. A helical membrane pass occupies residues proline 183–phenylalanine 203. The Perinuclear space portion of the chain corresponds to serine 204–leucine 256. The helical transmembrane segment at leucine 257–phenylalanine 277 threads the bilayer. The Cytoplasmic portion of the chain corresponds to arginine 278–serine 601.

Belongs to the NDC1 family. As to quaternary structure, component of the nuclear pore complex (NPC). NPC constitutes the exclusive means of nucleocytoplasmic transport. NPCs allow the passive diffusion of ions and small molecules and the active, nuclear transport receptor-mediated bidirectional transport of macromolecules such as proteins, RNAs, ribonucleoparticles (RNPs), and ribosomal subunits across the nuclear envelope. Due to its 8-fold rotational symmetry, all subunits are present with 8 copies or multiples thereof.

It localises to the nucleus. The protein resides in the nuclear pore complex. The protein localises to the nucleus membrane. It is found in the cytoplasm. Its subcellular location is the cytoskeleton. It localises to the microtubule organizing center. The protein resides in the spindle pole body. Component of the nuclear pore complex (NPC) and the spindle pole body (SPB), which plays a key role in de novo assembly and insertion of both structures in the nuclear envelope. Involved in the formation of the bipolar mitotic spindle. Anchors the spindle pole body in the nuclear envelope. This chain is Nuclear envelope protein ndc1 (cut11), found in Schizosaccharomyces pombe (strain 972 / ATCC 24843) (Fission yeast).